Here is a 289-residue protein sequence, read N- to C-terminus: Phosphatidylserine decarboxylase proenzyme (289 aa).

Active-site charge relay system; for autoendoproteolytic cleavage activity residues include Asp-89, His-146, and Ser-252. Catalysis depends on Ser-252, which acts as the Schiff-base intermediate with substrate; via pyruvic acid; for decarboxylase activity. Ser-252 is modified (pyruvic acid (Ser); by autocatalysis).

Belongs to the phosphatidylserine decarboxylase family. PSD-B subfamily. Prokaryotic type I sub-subfamily. In terms of assembly, heterodimer of a large membrane-associated beta subunit and a small pyruvoyl-containing alpha subunit. Requires pyruvate as cofactor. In terms of processing, is synthesized initially as an inactive proenzyme. Formation of the active enzyme involves a self-maturation process in which the active site pyruvoyl group is generated from an internal serine residue via an autocatalytic post-translational modification. Two non-identical subunits are generated from the proenzyme in this reaction, and the pyruvate is formed at the N-terminus of the alpha chain, which is derived from the carboxyl end of the proenzyme. The autoendoproteolytic cleavage occurs by a canonical serine protease mechanism, in which the side chain hydroxyl group of the serine supplies its oxygen atom to form the C-terminus of the beta chain, while the remainder of the serine residue undergoes an oxidative deamination to produce ammonia and the pyruvoyl prosthetic group on the alpha chain. During this reaction, the Ser that is part of the protease active site of the proenzyme becomes the pyruvoyl prosthetic group, which constitutes an essential element of the active site of the mature decarboxylase.

It is found in the cell membrane. The catalysed reaction is a 1,2-diacyl-sn-glycero-3-phospho-L-serine + H(+) = a 1,2-diacyl-sn-glycero-3-phosphoethanolamine + CO2. The protein operates within phospholipid metabolism; phosphatidylethanolamine biosynthesis; phosphatidylethanolamine from CDP-diacylglycerol: step 2/2. Its function is as follows. Catalyzes the formation of phosphatidylethanolamine (PtdEtn) from phosphatidylserine (PtdSer). This Nitrosospira multiformis (strain ATCC 25196 / NCIMB 11849 / C 71) protein is Phosphatidylserine decarboxylase proenzyme.